Reading from the N-terminus, the 386-residue chain is Methionyl-tRNA formyltransferase, mitochondrial (386 aa).

Belongs to the Fmt family.

The protein resides in the mitochondrion. It carries out the reaction L-methionyl-tRNA(fMet) + (6R)-10-formyltetrahydrofolate = N-formyl-L-methionyl-tRNA(fMet) + (6S)-5,6,7,8-tetrahydrofolate + H(+). Methionyl-tRNA formyltransferase that formylates methionyl-tRNA in mitochondria and is crucial for translation initiation. The polypeptide is Methionyl-tRNA formyltransferase, mitochondrial (Mtfmt) (Mus musculus (Mouse)).